The chain runs to 126 residues: Glycine cleavage system H protein (126 aa).

The Lipoyl-binding domain maps to 22 to 104; that stretch reads KLRIGITDFA…YEKAWMIVIE (83 aa). The residue at position 63 (Lys63) is an N6-lipoyllysine.

It belongs to the GcvH family. The glycine cleavage system is composed of four proteins: P, T, L and H. It depends on (R)-lipoate as a cofactor.

Its function is as follows. The glycine cleavage system catalyzes the degradation of glycine. The H protein shuttles the methylamine group of glycine from the P protein to the T protein. Is also involved in protein lipoylation via its role as an octanoyl/lipoyl carrier protein intermediate. The chain is Glycine cleavage system H protein from Oceanobacillus iheyensis (strain DSM 14371 / CIP 107618 / JCM 11309 / KCTC 3954 / HTE831).